The chain runs to 65 residues: Alpha-toxin OD1 (65 aa).

One can recognise an LCN-type CS-alpha/beta domain in the interval 3-65 (RDAYIADDKN…VPIRIPGKCR (63 aa)). An Important for toxin selectivity for individual Nav channel subtype (Nav1.6/SCN8A and Nav1.7/SCN9A), but not for toxin potency motif is present at residues 9-11 (DDK). Disulfide bonds link Cys-13-Cys-64, Cys-17-Cys-37, Cys-23-Cys-47, and Cys-27-Cys-49. Arg-65 bears the Arginine amide mark.

It belongs to the long (4 C-C) scorpion toxin superfamily. Sodium channel inhibitor family. Alpha subfamily. As to expression, expressed by the venom gland.

It localises to the secreted. Its function is as follows. Alpha toxins bind voltage-independently at site-3 of sodium channels and inhibit the inactivation of the activated channels. The toxin affect mammalian sodium channels Nav1.7/SCN9A (EC(50)=4.5 nM), Nav1.4/SCN4A (EC(50)=9.6 nM), Nav1.6/SCN8A (EC(50)=30 nM), Nav1.5/SCN5A (only at micromolar concentrations), and insect sodium channel para/tipE (EC(50)=80 nM). In vivo, intraplantar administration of this toxin elicits pain behaviors, including licking and flinching of the hind paw. The chain is Alpha-toxin OD1 from Odontobuthus doriae (Yellow Iranian scorpion).